The chain runs to 307 residues: Malate dehydrogenase (307 aa).

NAD(+) is bound by residues 8-13 (GAGNVG) and aspartate 32. Substrate-binding residues include arginine 81 and arginine 87. NAD(+)-binding positions include asparagine 94 and 117–119 (VSN). Residues asparagine 119 and arginine 150 each contribute to the substrate site. Histidine 174 functions as the Proton acceptor in the catalytic mechanism.

It belongs to the LDH/MDH superfamily. MDH type 3 family.

The enzyme catalyses (S)-malate + NAD(+) = oxaloacetate + NADH + H(+). Its function is as follows. Catalyzes the reversible oxidation of malate to oxaloacetate. The polypeptide is Malate dehydrogenase (Dehalococcoides mccartyi (strain ATCC BAA-2266 / KCTC 15142 / 195) (Dehalococcoides ethenogenes (strain 195))).